The chain runs to 286 residues: Cbb3-type cytochrome c oxidase subunit CcoP (286 aa).

Helical transmembrane passes span 11–31 (FGLI…SSLI) and 62–82 (VGWI…FFFG). Cytochrome c domains follow at residues 116–195 (ELVD…MAEL) and 205–286 (QLID…LSNR). Positions 129, 132, 133, 174, 219, 222, 223, and 264 each coordinate heme c.

Belongs to the CcoP / FixP family. As to quaternary structure, component of the cbb3-type cytochrome c oxidase at least composed of CcoN, CcoO, CcoQ and CcoP. Requires heme c as cofactor.

It is found in the cell inner membrane. It functions in the pathway energy metabolism; oxidative phosphorylation. Functionally, C-type cytochrome. Part of the cbb3-type cytochrome c oxidase complex. CcoP subunit is required for transferring electrons from donor cytochrome c via its heme groups to CcoO subunit. From there, electrons are shuttled to the catalytic binuclear center of CcoN subunit where oxygen reduction takes place. The complex also functions as a proton pump. The polypeptide is Cbb3-type cytochrome c oxidase subunit CcoP (Helicobacter pylori (strain ATCC 700392 / 26695) (Campylobacter pylori)).